A 379-amino-acid polypeptide reads, in one-letter code: Chaperone protein DnaJ (379 aa).

Residues 5–70 enclose the J domain; that stretch reads DYYEVLGVEK…QKRAAYDQYG (66 aa). Residues 133–211 form a CR-type zinc finger; it reads GKSVEIRVPT…CHGQGRVEKT (79 aa). 8 residues coordinate Zn(2+): C146, C149, C163, C166, C185, C188, C199, and C202. CXXCXGXG motif repeat units follow at residues 146 to 153, 163 to 170, 185 to 192, and 199 to 206; these read CDTCDGSG, CTTCHGQG, CPTCGGKG, and CDVCHGQG.

This sequence belongs to the DnaJ family. Homodimer. It depends on Zn(2+) as a cofactor.

Its subcellular location is the cytoplasm. Its function is as follows. Participates actively in the response to hyperosmotic and heat shock by preventing the aggregation of stress-denatured proteins and by disaggregating proteins, also in an autonomous, DnaK-independent fashion. Unfolded proteins bind initially to DnaJ; upon interaction with the DnaJ-bound protein, DnaK hydrolyzes its bound ATP, resulting in the formation of a stable complex. GrpE releases ADP from DnaK; ATP binding to DnaK triggers the release of the substrate protein, thus completing the reaction cycle. Several rounds of ATP-dependent interactions between DnaJ, DnaK and GrpE are required for fully efficient folding. Also involved, together with DnaK and GrpE, in the DNA replication of plasmids through activation of initiation proteins. The polypeptide is Chaperone protein DnaJ (Pseudoalteromonas atlantica (strain T6c / ATCC BAA-1087)).